The following is a 207-amino-acid chain: Pyridoxine/pyridoxamine 5'-phosphate oxidase (207 aa).

FMN is bound by residues 53–58 (RMVLLK), 68–69 (YT), Lys-75, and Gln-97. Residue Lys-58 participates in substrate binding. The substrate site is built by Tyr-115, Arg-119, and Ser-123. Residues 132 to 133 (QS) and Trp-177 contribute to the FMN site. Substrate is bound at residue 183 to 185 (RLH). Arg-187 serves as a coordination point for FMN.

The protein belongs to the pyridoxamine 5'-phosphate oxidase family. In terms of assembly, homodimer. FMN is required as a cofactor.

It catalyses the reaction pyridoxamine 5'-phosphate + O2 + H2O = pyridoxal 5'-phosphate + H2O2 + NH4(+). It carries out the reaction pyridoxine 5'-phosphate + O2 = pyridoxal 5'-phosphate + H2O2. Its pathway is cofactor metabolism; pyridoxal 5'-phosphate salvage; pyridoxal 5'-phosphate from pyridoxamine 5'-phosphate: step 1/1. The protein operates within cofactor metabolism; pyridoxal 5'-phosphate salvage; pyridoxal 5'-phosphate from pyridoxine 5'-phosphate: step 1/1. Functionally, catalyzes the oxidation of either pyridoxine 5'-phosphate (PNP) or pyridoxamine 5'-phosphate (PMP) into pyridoxal 5'-phosphate (PLP). In Bartonella henselae (strain ATCC 49882 / DSM 28221 / CCUG 30454 / Houston 1) (Rochalimaea henselae), this protein is Pyridoxine/pyridoxamine 5'-phosphate oxidase.